The sequence spans 96 residues: Protein RnfH (96 aa).

This sequence belongs to the UPF0125 (RnfH) family.

This Citrobacter koseri (strain ATCC BAA-895 / CDC 4225-83 / SGSC4696) protein is Protein RnfH.